The chain runs to 994 residues: Regulator of telomere elongation helicase 1 homolog (994 aa).

A Helicase ATP-binding domain is found at 15-300 (PKLSVKFPFE…EETARSEADA (286 aa)). 50-57 (SPTGTGKT) is a binding site for ATP. [4Fe-4S] cluster-binding residues include Cys-142, Cys-160, Cys-169, and Cys-208. Positions 251–254 (DEAH) match the DEAH box motif. Positions 876 to 895 (FKIETPGPSTSTLTQKSEPP) are disordered. Over residues 882-892 (GPSTSTLTQKS) the composition is skewed to polar residues.

It belongs to the helicase family. RAD3/XPD subfamily.

Its subcellular location is the nucleus. The catalysed reaction is ATP + H2O = ADP + phosphate + H(+). Its function is as follows. A probable ATP-dependent DNA helicase implicated in DNA repair and the maintenance of genomic stability. Acts as an anti-recombinase to counteract toxic recombination and limit crossover during meiosis. Regulates meiotic recombination and crossover homeostasis by physically dissociating strand invasion events and thereby promotes noncrossover repair by meiotic synthesis dependent strand annealing (SDSA) as well as disassembly of D loop recombination intermediates. The polypeptide is Regulator of telomere elongation helicase 1 homolog (Caenorhabditis elegans).